Here is a 273-residue protein sequence, read N- to C-terminus: Exosome complex component MTR3 (273 aa).

Residues 1 to 36 (MPGDHRRIRGPEESQPPQLYAAEDDETPAARDPTRL) are disordered.

The protein belongs to the RNase PH family. In terms of assembly, component of the RNA exosome core complex (Exo-9), composed of EXOSC1, EXOSC2, EXOSC3, EXOSC4, EXOSC5, EXOSC6, EXOSC7, EXOSC8 and EXOSC9; within the complex interacts with EXOSC1, EXOSC7 and EXOSC8. The catalytically inactive RNA exosome core complex (Exo-9) associates with the catalytic subunit EXOSC10/RRP6. Exo-9 may associate with DIS3 to form the nucleolar exosome complex, or DIS3L to form the cytoplasmic exosome complex. Exo-9 is formed by a hexameric base ring consisting of the heterodimers EXOSC4-EXOSC9, EXOSC5-EXOSC8 and EXOSC6-EXOSC7, and a cap ring consisting of EXOSC1, EXOSC2 and EXOSC3. The RNA exosome complex associates with cofactors EXOSC10/RRP6, C1D/RRP47, MPHOSPH6/MPP6 and MTREX/MTR4.

The protein localises to the cytoplasm. Its subcellular location is the nucleus. It is found in the nucleolus. Its function is as follows. Non-catalytic component of the RNA exosome complex which has 3'-&gt;5' exoribonuclease activity and participates in a multitude of cellular RNA processing and degradation events. In the nucleus, the RNA exosome complex is involved in proper maturation of stable RNA species such as rRNA, snRNA and snoRNA, in the elimination of RNA processing by-products and non-coding 'pervasive' transcripts, such as antisense RNA species and promoter-upstream transcripts (PROMPTs), and of mRNAs with processing defects, thereby limiting or excluding their export to the cytoplasm. The RNA exosome may be involved in Ig class switch recombination (CSR) and/or Ig variable region somatic hypermutation (SHM) by targeting AICDA deamination activity to transcribed dsDNA substrates. In the cytoplasm, the RNA exosome complex is involved in general mRNA turnover and specifically degrades inherently unstable mRNAs containing AU-rich elements (AREs) within their 3' untranslated regions, and in RNA surveillance pathways, preventing translation of aberrant mRNAs. It seems to be involved in degradation of histone mRNA. The catalytic inactive RNA exosome core complex of 9 subunits (Exo-9) is proposed to play a pivotal role in the binding and presentation of RNA for ribonucleolysis, and to serve as a scaffold for the association with catalytic subunits and accessory proteins or complexes. The polypeptide is Exosome complex component MTR3 (Exosc6) (Mus musculus (Mouse)).